The sequence spans 282 residues: MRIAVPNKGRLHDPTLALLDRAGIGVEDGADRQLYADTVDPALTVLYARAADIPEYVADGAADAGITGHDQLRESDVDCVEERLDLNYGSCRLVLAAPEDGDVTAPADLDGATVATEFPTITRAYFADTTATPEIVEVTGATELTPHVEMADAIVDITSTGTTLRVNRLQVVDEVLSSSVRLFAHEDVHDDPKVQQVETALRSVLDAHGKRYVMLNAPADRLDDVKAVLPGLGGPTVLDVDEPGTVAVHAVVPERDVFEAISELKAVGASGILVTEIERLVD.

This sequence belongs to the ATP phosphoribosyltransferase family. Long subfamily. Mg(2+) serves as cofactor.

It localises to the cytoplasm. The catalysed reaction is 1-(5-phospho-beta-D-ribosyl)-ATP + diphosphate = 5-phospho-alpha-D-ribose 1-diphosphate + ATP. Its pathway is amino-acid biosynthesis; L-histidine biosynthesis; L-histidine from 5-phospho-alpha-D-ribose 1-diphosphate: step 1/9. With respect to regulation, feedback inhibited by histidine. Functionally, catalyzes the condensation of ATP and 5-phosphoribose 1-diphosphate to form N'-(5'-phosphoribosyl)-ATP (PR-ATP). Has a crucial role in the pathway because the rate of histidine biosynthesis seems to be controlled primarily by regulation of HisG enzymatic activity. The protein is ATP phosphoribosyltransferase of Halobacterium salinarum (strain ATCC 29341 / DSM 671 / R1).